We begin with the raw amino-acid sequence, 763 residues long: 1,4-alpha-glucan branching enzyme GlgB (763 aa).

Aspartate 437 acts as the Nucleophile in catalysis. Catalysis depends on glutamate 488, which acts as the Proton donor.

It belongs to the glycosyl hydrolase 13 family. GlgB subfamily. Monomer.

The enzyme catalyses Transfers a segment of a (1-&gt;4)-alpha-D-glucan chain to a primary hydroxy group in a similar glucan chain.. The protein operates within glycan biosynthesis; glycogen biosynthesis. Catalyzes the formation of the alpha-1,6-glucosidic linkages in glycogen by scission of a 1,4-alpha-linked oligosaccharide from growing alpha-1,4-glucan chains and the subsequent attachment of the oligosaccharide to the alpha-1,6 position. The chain is 1,4-alpha-glucan branching enzyme GlgB from Synechococcus sp. (strain JA-2-3B'a(2-13)) (Cyanobacteria bacterium Yellowstone B-Prime).